The following is a 311-amino-acid chain: MLVVPARLHRWPPEVQDLFGREGPLVLEIGFGDGRFTAELARSRPDWLVLGAEVSAASVLRALRRMRREGLANVRLYHGQGPFALRNLVLPGTLDQVIVNFPDPWPKKRHQERRLLREAFFRRLSTRLKSGGSLLLTTDHEGYFRFALEEAERTGLYRVEVRPPPEAHLRTKYALKWKEAGRTFFHAAFIKLREDPAPWPPLRRYDVAHALLSGELPQDLALEKTAVRLKEGVAVFLEVARGKEGFYVLTHVEEEDLTQDLLLEVRKSARGVYAGVSRFGSPLITEAVKGAVRALVDRLEAHGLEVVQDHT.

S-adenosyl-L-methionine contacts are provided by Glu28, Glu53, and Asp103. Asp103 is a catalytic residue. Residues Lys107 and Asp139 each contribute to the substrate site.

It belongs to the class I-like SAM-binding methyltransferase superfamily. TrmB family.

It carries out the reaction guanosine(46) in tRNA + S-adenosyl-L-methionine = N(7)-methylguanosine(46) in tRNA + S-adenosyl-L-homocysteine. Its pathway is tRNA modification; N(7)-methylguanine-tRNA biosynthesis. Functionally, catalyzes the formation of N(7)-methylguanine at position 46 (m7G46) in tRNA. This Thermus thermophilus (strain ATCC BAA-163 / DSM 7039 / HB27) protein is tRNA (guanine-N(7)-)-methyltransferase.